The sequence spans 447 residues: tRNA-2-methylthio-N(6)-dimethylallyladenosine synthase (447 aa).

The MTTase N-terminal domain occupies lysine 3 to glutamate 120. Cysteine 12, cysteine 49, cysteine 83, cysteine 157, cysteine 161, and cysteine 164 together coordinate [4Fe-4S] cluster. Residues arginine 143–arginine 375 form the Radical SAM core domain. One can recognise a TRAM domain in the interval glutamate 378–glutamate 441.

This sequence belongs to the methylthiotransferase family. MiaB subfamily. Monomer. [4Fe-4S] cluster serves as cofactor.

The protein resides in the cytoplasm. It catalyses the reaction N(6)-dimethylallyladenosine(37) in tRNA + (sulfur carrier)-SH + AH2 + 2 S-adenosyl-L-methionine = 2-methylsulfanyl-N(6)-dimethylallyladenosine(37) in tRNA + (sulfur carrier)-H + 5'-deoxyadenosine + L-methionine + A + S-adenosyl-L-homocysteine + 2 H(+). Its function is as follows. Catalyzes the methylthiolation of N6-(dimethylallyl)adenosine (i(6)A), leading to the formation of 2-methylthio-N6-(dimethylallyl)adenosine (ms(2)i(6)A) at position 37 in tRNAs that read codons beginning with uridine. This is tRNA-2-methylthio-N(6)-dimethylallyladenosine synthase from Legionella pneumophila (strain Paris).